A 30-amino-acid polypeptide reads, in one-letter code: SDDPKESEGDLHCVCVKTTRLVRPGHITXL.

Belongs to the intercrine alpha (chemokine CxC) family. As to quaternary structure, homotetramer. Interacts with TNFAIP6 (via Link domain). Interacts with CCR1. Interacts with CXCR3. Binds non-covalently to a proteoglycan molecule.

The protein localises to the secreted. Its function is as follows. Chemokine released during platelet aggregation that plays a role in different biological processes including hematopoiesis, cell proliferation, differentiation, and activation. Acts via different functional receptors including CCR1, CXCR3A or CXCR3B. Upon interaction with CXCR3A receptor, induces activated T-lymphocytes migration mediated via downstream Ras/extracellular signal-regulated kinase (ERK) signaling. Neutralizes the anticoagulant effect of heparin by binding more strongly to heparin than to the chondroitin-4-sulfate chains of the carrier molecule. Plays a role in the inhibition of hematopoiesis and in the maintenance of hematopoietic stem cell (HSC) quiescence. Chemotactic for neutrophils and monocytes via CCR1. Inhibits endothelial cell proliferation. In cooperation with toll-like receptor 8/TLR8, induces chromatin remodeling and activates inflammatory gene expression via the TBK1-IRF5 axis. In addition, induces myofibroblast differentiation and collagen synthesis in different precursor cells, including endothelial cells, by stimulating endothelial-to-mesenchymal transition. This is Platelet factor 4 (PF4) from Oryctolagus cuniculus (Rabbit).